Consider the following 566-residue polypeptide: DBIRD complex subunit ZNF326 (566 aa).

Disordered regions lie at residues 19-81 (HCGV…ESYD) and 145-180 (RPGF…GRGT). The span at 59 to 73 (SHGGGGGGGGGGGNR) shows a compositional bias: gly residues. The span at 156–165 (SYSSYSSFSS) shows a compositional bias: low complexity. A Bipartite nuclear localization signal motif is present at residues 240-263 (KRKMMPQPYNKPGGTFIKKPKMTK). A disordered region spans residues 314–347 (FGDSKGEGKSEEEEKRRIEARREKQRRRREKNSE). The segment covering 317 to 335 (SKGEGKSEEEEKRRIEARR) has biased composition (basic and acidic residues). 2 consecutive C2H2 AKAP95-type zinc fingers follow at residues 359 to 381 (CSFC…SAAH) and 452 to 475 (CSAC…SPDH). The interval 516–566 (PFEINDQAQEQQTEEEDKAEEPAEGEEEEEEEEEEETEEQTDFTLDHTEDN) is disordered. The segment covering 527 to 556 (QTEEEDKAEEPAEGEEEEEEEEEEETEEQT) has biased composition (acidic residues).

It belongs to the AKAP95 family. As to quaternary structure, component of the DBIRD complex.

It localises to the nucleus. Its function is as follows. Core component of the DBIRD complex, a multiprotein complex that acts at the interface between core mRNP particles and RNA polymerase II (RNAPII) and integrates transcript elongation with the regulation of alternative splicing. The sequence is that of DBIRD complex subunit ZNF326 (ZNF326) from Gallus gallus (Chicken).